The following is a 300-amino-acid chain: Small ribosomal subunit protein uS2 (300 aa).

The interval 228–300 (RAGLSADKDA…PAAEAPSTEA (73 aa)) is disordered. Over residues 258-300 (AAPAAEAAPAAEAAPAAEAAPAAEAQAAPAAEAPAAEAPSTEA) the composition is skewed to low complexity.

This sequence belongs to the universal ribosomal protein uS2 family.

The sequence is that of Small ribosomal subunit protein uS2 from Rhodococcus jostii (strain RHA1).